Consider the following 718-residue polypeptide: Protein spire homolog 2 (718 aa).

Disordered regions lie at residues 1-22 (MARA…ARPE) and 143-166 (DSSC…EGGP). A compositionally biased stretch (low complexity) spans 10 to 21 (AAPERAGGAARP). Positions 26–207 (LSLEEVLKVY…RALFVETLEL (182 aa)) constitute a KIND domain. WH2 domains follow at residues 251-265 (QLMR…LKKV), 281-299 (PFEM…LRKV), and 345-362 (LHEK…LRPV). Residue S374 is modified to Phosphoserine. The disordered stretch occupies residues 397-434 (TDTGSGSQRPRPRVLLKAPTLAEMEEMNTSEEEESPCG). The segment covering 419 to 432 (EMEEMNTSEEEESP) has biased composition (acidic residues). Phosphoserine occurs at positions 443, 445, and 479. The interval 456–518 (MASGLQSAAQ…SSLSSVDGPE (63 aa)) is disordered. Residues 496–513 (SGQSQPLPSSALPSSLSS) are compositionally biased toward low complexity. Residues 538–558 (LALTVEEVVDVRRVLVKAEME) are spir-box.

The protein belongs to the spire family. As to expression, detected in oocytes.

The protein localises to the cytoplasm. The protein resides in the cytoskeleton. Its subcellular location is the cytosol. It localises to the cell membrane. It is found in the cytoplasmic vesicle membrane. Functionally, acts as an actin nucleation factor, remains associated with the slow-growing pointed end of the new filament. Involved in intracellular vesicle transport along actin fibers, providing a novel link between actin cytoskeleton dynamics and intracellular transport. Required for asymmetric spindle positioning and asymmetric cell division during oocyte meiosis. Required for normal formation of the cleavage furrow and for polar body extrusion during female germ cell meiosis. Also acts in the nucleus: together with SPIRE1 and SPIRE2, promotes assembly of nuclear actin filaments in response to DNA damage in order to facilitate movement of chromatin and repair factors after DNA damage. In Mus musculus (Mouse), this protein is Protein spire homolog 2 (Spire2).